Consider the following 175-residue polypeptide: Nucleoside triphosphate/diphosphate phosphatase (175 aa).

Catalysis depends on Arg-23, which acts as the Proton donor. Mg(2+)-binding residues include Asn-87, Asp-103, Asp-105, Asp-107, Asp-120, and Glu-123.

Belongs to the Ntdp family. Requires Mg(2+) as cofactor.

It catalyses the reaction a ribonucleoside 5'-triphosphate + H2O = a ribonucleoside 5'-diphosphate + phosphate + H(+). It carries out the reaction a ribonucleoside 5'-diphosphate + H2O = a ribonucleoside 5'-phosphate + phosphate + H(+). In terms of biological role, has nucleoside phosphatase activity towards nucleoside triphosphates and nucleoside diphosphates. The sequence is that of Nucleoside triphosphate/diphosphate phosphatase from Halalkalibacterium halodurans (strain ATCC BAA-125 / DSM 18197 / FERM 7344 / JCM 9153 / C-125) (Bacillus halodurans).